Reading from the N-terminus, the 399-residue chain is MAKEKFQRTKPHVNIGTIGHVDHGKTTLTAAITGVLAQKGLSEMKDYDNIDNAPEEKERGITINTSHVEYETENRHYAHVDCPGHADYVKNMITGAAQMDGAILVVAATDGPMPQTREHILLSRQVGVPAIVVFLNKMDMVDDEELLELVEMEVRELLSEYEFDGDNAPVVAGSALKALEEVKAGQLGEWSEKILELMAAVDEYIPTPERDTEKDFLMPIEDVFSISGRGTVVTGRIERGTLHLNDDVDIVGFKPTVTTKVTGIEMFRKEMDEAQAGDNVGVLLRGIKKDEVERGQVLAKPGSITPHTKFEAEVYALTKEEGGRHKPFFNGYRPQFYIRTTDVTGSVILPEGVEMVMPGDNVKLTVELIAPIALEEGTRFAIREGGRTVGAGVVTKIIE.

One can recognise a tr-type G domain in the interval 10-209 (KPHVNIGTIG…AVDEYIPTPE (200 aa)). The interval 19-26 (GHVDHGKT) is G1. 19–26 (GHVDHGKT) is a binding site for GTP. Mg(2+) is bound at residue T26. The interval 60-64 (GITIN) is G2. The G3 stretch occupies residues 81-84 (DCPG). Residues 81–85 (DCPGH) and 136–139 (NKMD) each bind GTP. A G4 region spans residues 136–139 (NKMD). Residues 174-176 (SAL) are G5.

The protein belongs to the TRAFAC class translation factor GTPase superfamily. Classic translation factor GTPase family. EF-Tu/EF-1A subfamily. As to quaternary structure, monomer.

The protein resides in the cytoplasm. The catalysed reaction is GTP + H2O = GDP + phosphate + H(+). GTP hydrolase that promotes the GTP-dependent binding of aminoacyl-tRNA to the A-site of ribosomes during protein biosynthesis. In Nautilia profundicola (strain ATCC BAA-1463 / DSM 18972 / AmH), this protein is Elongation factor Tu.